Consider the following 212-residue polypeptide: Penicillin-binding protein activator LpoB (212 aa).

The signal sequence occupies residues 1-19 (MTKMHRYAAIAALAIFLSG). Cys-20 is lipidated: N-palmitoyl cysteine. Cys-20 is lipidated: S-diacylglycerol cysteine. Residues 28-73 (PVEEVKPAPEQPAQPPQPPVVPSVPTIPQQPGPIEHEDQTGQPAPK) are disordered. The span at 36–49 (PEQPAQPPQPPVVP) shows a compositional bias: pro residues.

The protein belongs to the LpoB family. As to quaternary structure, interacts with PBP1b.

The protein localises to the cell outer membrane. Regulator of peptidoglycan synthesis that is essential for the function of penicillin-binding protein 1B (PBP1b). The chain is Penicillin-binding protein activator LpoB from Salmonella typhimurium (strain LT2 / SGSC1412 / ATCC 700720).